The chain runs to 579 residues: MKREHHYLHPRPEPPSVATGSNRESYLNTGKAKLWEEEVQLDGGMDELLAVLGYKVKSSDMAEVAQKLEQLEEAMCQVQDTGLSHLAFDTVHYNPSDLSTWVESMLTELHPPPTSHLDDSSFLAPAESSTIANVDYEPQLQTSSRIFEESSSSDYDLKAITDSAIYSPRESKRLKASESDTDVFSTSAIGASNFATRPVVLVDSQENGIQLVHALMVCAEAVQQNNLNLAEALVKRIDYLAVSQAGAMRKVATFFAEALARRIYRLCPENPLDRSVLDMLQMHFYESCPYLKFAHFTANQAILEAFEGKKRVHVIDFSMNQGIQWPALIQALALRPSGPPTFRLTGIGPPAPDNSDYLQDVGWKLVKFAETLHVEFEYRGFVANSLADLDASMLELRPSEVESVVVNSVFELHQLLARPGAIEKVLSVVKQMKPEIVTVVEQEANHNGPVFVERFTESLHYYSTLFDSLECSPNSQDKMMSEMYLGKQICNVVACEGADRVERHETLTQWRTRLSSAGFDPIHLGSNAFKQASILLALFGSGEGYRVEENEGSLMLGWHTRPLIATSAWKPGNNPVVAH.

Residues 1 to 25 form a disordered region; the sequence is MKREHHYLHPRPEPPSVATGSNRES. A DELLA motif motif is present at residues 46–50; it reads DELLA. The 369-residue stretch at 202-570 folds into the GRAS domain; it reads VDSQENGIQL…RPLIATSAWK (369 aa). Positions 209–263 are leucine repeat I (LRI); the sequence is IQLVHALMVCAEAVQQNNLNLAEALVKRIDYLAVSQAGAMRKVATFFAEALARRI. The segment at 281-346 is VHIID; it reads QMHFYESCPY…SGPPTFRLTG (66 aa). The short motif at 312–316 is the VHIID element; it reads VHVID. The tract at residues 360-392 is leucine repeat II (LRII); the sequence is DVGWKLVKFAETLHVEFEYRGFVANSLADLDAS. A PFYRE region spans residues 404–491; that stretch reads VVVNSVFELH…EMYLGKQICN (88 aa). The LXXLL motif motif lies at 412 to 416; it reads LHQLL. Residues 494-570 form an SAW region; that stretch reads ACEGADRVER…RPLIATSAWK (77 aa).

It belongs to the GRAS family. DELLA subfamily. Phosphorylated. Post-translationally, ubiquitinated. Upon GA application it is ubiquitinated, leading to its subsequent degradation.

The protein resides in the nucleus. Probable transcriptional regulator that acts as a repressor of the gibberellin (GA) signaling pathway. Probably acts by participating in large multiprotein complexes that represses transcription of GA-inducible genes. Upon GA application, it is degraded by the proteasome, allowing the GA signaling pathway. This chain is DELLA protein GAIP (GAIP), found in Cucurbita maxima (Pumpkin).